The chain runs to 146 residues: Endothelial differentiation-related factor 1 homolog (146 aa).

A disordered region spans residues 13–53; the sequence is RKKGSAAQSKSKQAVTAAQRKGEAVETSKKWAAGQNKQHVV. Positions 17 to 31 are enriched in low complexity; the sequence is SAAQSKSKQAVTAAQ. The segment covering 32–41 has biased composition (basic and acidic residues); it reads RKGEAVETSK. The 55-residue stretch at 80 to 134 folds into the HTH cro/C1-type domain; that stretch reads IQQGRQNKGLTQKDLATKINEKPQIIAEYECGKAIPNNQVMGKIERAIGLKLRGK. A DNA-binding region (H-T-H motif) is located at residues 91-110; that stretch reads QKDLATKINEKPQIIAEYEC.

The protein resides in the nucleus. In terms of biological role, probable transcriptional coactivator. The chain is Endothelial differentiation-related factor 1 homolog (edf1) from Danio rerio (Zebrafish).